A 479-amino-acid polypeptide reads, in one-letter code: UDP-glycosyltransferase 84A3 (479 aa).

Catalysis depends on His19, which acts as the Proton acceptor. His19 contacts an anthocyanidin. UDP-alpha-D-glucose is bound by residues Gln346, His361, Trp364, Asn365, Ser366, and Glu369. Residue Gly384 coordinates an anthocyanidin. UDP-alpha-D-glucose is bound by residues Asp385 and Gln386.

The protein belongs to the UDP-glycosyltransferase family.

It catalyses the reaction (E)-4-coumarate + UDP-alpha-D-glucose = 4-O-(beta-D-glucosyl)-trans-4-coumarate + UDP + H(+). It carries out the reaction (E)-ferulate + UDP-alpha-D-glucose = 1-O-[(E)-feruloyl]-beta-D-glucose + UDP. The enzyme catalyses (E)-caffeate + UDP-alpha-D-glucose = 1-O-[(E)-caffeoyl]-beta-D-glucose + UDP. The catalysed reaction is (E)-sinapate + UDP-alpha-D-glucose = 1-O-(trans-sinapoyl)-beta-D-glucose + UDP. It catalyses the reaction (E)-cinnamate + UDP-alpha-D-glucose = 1-O-(trans-cinnamoyl)-beta-D-glucose + UDP. Functionally, UDP-glucosyltransferase that forms glucose esters with phenylpropanoids. Glucosylates 4-coumarate, ferulate, caffeate, sinapate and cinnamate. This chain is UDP-glycosyltransferase 84A3, found in Arabidopsis thaliana (Mouse-ear cress).